The chain runs to 256 residues: Anamorsin homolog (256 aa).

Residues 1 to 136 (MNSLSLELNK…DTNESSTINI (136 aa)) are N-terminal SAM-like domain. Residues 126–148 (WDTNESSTINIPSTSSNNPWASI) form a disordered region. Over residues 131–144 (SSTINIPSTSSNNP) the composition is skewed to low complexity. The interval 137–166 (PSTSSNNPWASIEGGDRINENDLVSENDKT) is linker. Residues Cys176, Cys185, Cys188, and Cys190 each coordinate [2Fe-2S] cluster. Residues 176-190 (CEVGKTKKACKNCTC) form a fe-S binding site A region. Cys217, Cys220, Cys228, and Cys231 together coordinate [4Fe-4S] cluster. Short sequence motifs (cx2C motif) lie at residues 217–220 (CGNC) and 228–231 (CGGC). A fe-S binding site B region spans residues 217-231 (CGNCSLGDAFRCGGC).

Belongs to the anamorsin family. Monomer. The cofactor is [2Fe-2S] cluster. Requires [4Fe-4S] cluster as cofactor.

Its subcellular location is the cytoplasm. The protein localises to the mitochondrion intermembrane space. Component of the cytosolic iron-sulfur (Fe-S) protein assembly (CIA) machinery. Required for the maturation of extramitochondrial Fe-S proteins. Part of an electron transfer chain functioning in an early step of cytosolic Fe-S biogenesis, facilitating the de novo assembly of a [4Fe-4S] cluster on the cytosolic Fe-S scaffold complex. Electrons are transferred from NADPH via a FAD- and FMN-containing diflavin oxidoreductase. Together with the diflavin oxidoreductase, also required for the assembly of the diferric tyrosyl radical cofactor of ribonucleotide reductase (RNR), probably by providing electrons for reduction during radical cofactor maturation in the catalytic small subunit. The polypeptide is Anamorsin homolog (rsc43) (Dictyostelium discoideum (Social amoeba)).